The primary structure comprises 132 residues: Small ribosomal subunit protein uS8c (132 aa).

Belongs to the universal ribosomal protein uS8 family. In terms of assembly, part of the 30S ribosomal subunit.

Its subcellular location is the plastid. The protein localises to the chloroplast. In terms of biological role, one of the primary rRNA binding proteins, it binds directly to 16S rRNA central domain where it helps coordinate assembly of the platform of the 30S subunit. The protein is Small ribosomal subunit protein uS8c (rps8) of Spirogyra maxima (Green alga).